We begin with the raw amino-acid sequence, 285 residues long: tRNA pseudouridine synthase B (285 aa).

The Nucleophile role is filled by aspartate 38.

This sequence belongs to the pseudouridine synthase TruB family. Type 1 subfamily.

It carries out the reaction uridine(55) in tRNA = pseudouridine(55) in tRNA. Responsible for synthesis of pseudouridine from uracil-55 in the psi GC loop of transfer RNAs. This Geobacillus kaustophilus (strain HTA426) protein is tRNA pseudouridine synthase B.